The primary structure comprises 839 residues: Thymine dioxygenase JBP1 (839 aa).

Positions 86–288 (KVCGVLIPKA…RLSCVFYYRA (203 aa)) are thymine dioxygenase. The Fe cation site is built by H213, D215, and H263. R279 is a 2-oxoglutarate binding site. Residues 415-583 (KGDILNEAMN…EIEQARRRAP (169 aa)) form a DNA-binding JBP1 domain region.

It belongs to the TET family. JBP1 subfamily. Monomer. Binds to DNA as a monomer. Fe(2+) is required as a cofactor.

The protein resides in the nucleus. The enzyme catalyses thymine + 2-oxoglutarate + O2 = 5-hydroxymethyluracil + succinate + CO2. Dioxygenase that catalyzes the first step of DNA base J (beta-d-glucosyl-HOMedU) biosynthesis by converting thymine to 5-hydroxymethyluracil (HOMedU). DNA base J is a hypermodified thymidine residue found in the genome of kinetoplastid parasites, which is localized primarily to repetitive DNA, namely the telomeres, and is implicated in the regulation of antigenic variation. Also specifically binds to base J-containing DNA (J-DNA). Involved in propagation and maintenance of DNA base J synthesis initiated by JBP2 by specifically binding already synthesized DNA base J and propagating J synthesis. Thymine dioxygenase activity and J-DNA-binding are independent functions. This chain is Thymine dioxygenase JBP1 (JBP1), found in Trypanosoma brucei brucei (strain 927/4 GUTat10.1).